The primary structure comprises 287 residues: Membrane protein insertase YidC 2 (287 aa).

Positions 1 to 26 (MKKKKRFKQKLLIASLVIGLVAVLSG) are cleaved as a signal peptide. Residue Cys-27 is the site of N-palmitoyl cysteine attachment. Residue Cys-27 is the site of S-diacylglycerol cysteine attachment. The next 5 helical transmembrane spans lie at 65-85 (YAVG…PLMI), 135-155 (MMGC…YQAI), 178-198 (YILP…SMMG), 207-224 (AMIV…GITL), and 228-250 (LALY…NNPF).

The protein belongs to the OXA1/ALB3/YidC family. Type 2 subfamily.

Its subcellular location is the cell membrane. In terms of biological role, required for the insertion and/or proper folding and/or complex formation of integral membrane proteins into the membrane. Involved in integration of membrane proteins that insert both dependently and independently of the Sec translocase complex, as well as at least some lipoproteins. This is Membrane protein insertase YidC 2 from Listeria innocua serovar 6a (strain ATCC BAA-680 / CLIP 11262).